The following is a 398-amino-acid chain: MRVPEIPEETASPLRAGDPPAQVAGHPLIRRSARVPRWRARLADHDAASLAELLRRAGGTASAARAVSGKVVRHAFGAEPGAPAPAWDARALAALGVGAWAHEALLALDPAPSLEIAERAPAQDDTLRLVLRAGDGALIESVLIPGPARTTLCVSSQVGCARACSFCETGRLGLERQLAAGEIVDQVRIARALAAERGGAPLRNLVFMGMGEPFDNLGEVLKAIRLLTDPRAFRFAPSHVTVSTVGVADKIEPFFRDARAELAVSLNAPDDARRQAIMPVNARFSMAALKEAIARALPPGRRVLFEYVLFDRFNDAPEDADLLAAYVAGLRCRVNVIPCNPGPDPALRPPSAARLDAFVARLSGHGVTTLVRRPRGRDVGGACGQLAGMARLRQPEPA.

Residues 1–24 (MRVPEIPEETASPLRAGDPPAQVA) are disordered. The active-site Proton acceptor is the E140. The region spanning 146-378 (GPARTTLCVS…TLVRRPRGRD (233 aa)) is the Radical SAM core domain. Cysteines 153 and 383 form a disulfide. Residues C160, C164, and C167 each contribute to the [4Fe-4S] cluster site. S-adenosyl-L-methionine-binding positions include 211–212 (GE), S243, 265–267 (SLN), and N340. The S-methylcysteine intermediate role is filled by C383.

Belongs to the radical SAM superfamily. RlmN family. [4Fe-4S] cluster serves as cofactor.

The protein resides in the cytoplasm. This is Probable RNA methyltransferase sce1580 from Sorangium cellulosum (strain So ce56) (Polyangium cellulosum (strain So ce56)).